The primary structure comprises 123 residues: SOSS complex subunit C homolog (123 aa).

The protein belongs to the SOSS-C family.

The protein is SOSS complex subunit C homolog of Drosophila ananassae (Fruit fly).